We begin with the raw amino-acid sequence, 193 residues long: Imidazoleglycerol-phosphate dehydratase (193 aa).

The protein belongs to the imidazoleglycerol-phosphate dehydratase family.

It is found in the cytoplasm. It catalyses the reaction D-erythro-1-(imidazol-4-yl)glycerol 3-phosphate = 3-(imidazol-4-yl)-2-oxopropyl phosphate + H2O. It participates in amino-acid biosynthesis; L-histidine biosynthesis; L-histidine from 5-phospho-alpha-D-ribose 1-diphosphate: step 6/9. In Saccharolobus islandicus (strain M.16.27) (Sulfolobus islandicus), this protein is Imidazoleglycerol-phosphate dehydratase.